Consider the following 637-residue polypeptide: tRNA uridine 5-carboxymethylaminomethyl modification enzyme MnmG (637 aa).

Residue 14–19 (GAGHAG) coordinates FAD. 279 to 293 (GPRYCPSIEDKVVRF) is a binding site for NAD(+).

This sequence belongs to the MnmG family. As to quaternary structure, homodimer. Heterotetramer of two MnmE and two MnmG subunits. The cofactor is FAD.

Its subcellular location is the cytoplasm. Its function is as follows. NAD-binding protein involved in the addition of a carboxymethylaminomethyl (cmnm) group at the wobble position (U34) of certain tRNAs, forming tRNA-cmnm(5)s(2)U34. This is tRNA uridine 5-carboxymethylaminomethyl modification enzyme MnmG from Desulfitobacterium hafniense (strain DSM 10664 / DCB-2).